Consider the following 455-residue polypeptide: Probable hexose phosphate transport protein (455 aa).

5 consecutive transmembrane segments (helical) span residues 34 to 54 (IFYS…SFTF), 70 to 90 (LGII…VSGV), 113 to 133 (IFFG…LNGW), 161 to 181 (VWST…GFII), and 185 to 205 (GWRG…LVLI). The segment at 219-242 (PIEKYKRDPHHAHHEGKSASEGTE) is disordered. A run of 6 helical transmembrane segments spans residues 257 to 277 (YVLT…IYIV), 302 to 322 (FCVS…GWLS), 331 to 351 (GPMN…MWFS), 363 to 383 (LLFV…LAAA), 394 to 414 (ASGF…YPLG), and 424 to 444 (GFFI…LPTW).

This sequence belongs to the major facilitator superfamily. Organophosphate:Pi antiporter (OPA) (TC 2.A.1.4) family.

It localises to the cell membrane. Its function is as follows. Transport protein for sugar phosphate uptake. The polypeptide is Probable hexose phosphate transport protein (uhpC) (Chlamydia pneumoniae (Chlamydophila pneumoniae)).